Here is a 146-residue protein sequence, read N- to C-terminus: Leghemoglobin (146 aa).

Residues 3–146 (AFTEKQEALV…FAAGIKKAYA (144 aa)) form the Globin domain. Nitrated tyrosine is present on residues Tyr-26 and Tyr-31. A heme b-binding site is contributed by Ser-46. Ser-46 carries the post-translational modification Phosphoserine. Residue His-62 coordinates O2. Heme b-binding residues include His-93 and Lys-96. Nitrated tyrosine is present on Tyr-134.

Belongs to the plant globin family. As to quaternary structure, monomer. In terms of processing, nitrated mainly at Tyr-31 and, to a lower extent, at Tyr-26 and Tyr-134, in effective nodules and particularly in hypoxic conditions; this mechanism may play a protective role in the symbiosis by buffering toxic peroxynitrite NO(2)(-). Nitration level decrease during nodule senescence. Post-translationally, phosphorylation at Ser-46 disrupts the molecular environment of its porphyrin ring oxygen binding pocket, thus leading to a reduced oxygen consumption and to the delivery of oxygen O(2) to symbiosomes. In terms of tissue distribution, root nodules.

It localises to the cytoplasm. The protein resides in the cytosol. Its subcellular location is the nucleus. Leghemoglobin that reversibly binds oxygen O(2) through a pentacoordinated heme iron. In root nodules, facilitates the diffusion of oxygen to the bacteroids while preventing the bacterial nitrogenase from being inactivated by buffering dioxygen, nitric oxide and carbon monoxide, and promoting the formation of reactive oxygen species (ROS, e.g. H(2)O(2)). This role is essential for symbiotic nitrogen fixation (SNF). The protein is Leghemoglobin of Phaseolus vulgaris (Kidney bean).